A 750-amino-acid polypeptide reads, in one-letter code: Tyrosine-protein phosphatase 2 (750 aa).

Residues 1 to 20 (MDRIAQQYRNGKRDNNGNRM) are disordered. Serine 258 is subject to Phosphoserine. Disordered regions lie at residues 327–348 (LHQKQLSQKQRGPQSTDDSKLY) and 425–450 (VKLPHSPKPPAVSEASTTETKTDKSY). Over residues 330-348 (KQLSQKQRGPQSTDDSKLY) the composition is skewed to polar residues. The 355-residue stretch at 383–737 (SPSPLSSDDT…IACYEALLNY (355 aa)) folds into the Tyrosine-protein phosphatase domain. Serine 430 is modified (phosphoserine). Catalysis depends on cysteine 666, which acts as the Phosphocysteine intermediate.

This sequence belongs to the protein-tyrosine phosphatase family. Non-receptor class subfamily. As to quaternary structure, interacts with HOG1.

The protein resides in the cytoplasm. It localises to the nucleus. The enzyme catalyses O-phospho-L-tyrosyl-[protein] + H2O = L-tyrosyl-[protein] + phosphate. Its function is as follows. Major phosphatase responsible with PTP3 for tyrosine dephosphorylation of MAP kinase HOG1 to inactivate its activity. May also be involved in the regulation of MAP kinase FUS3. May be implicated in the ubiquitin-mediated protein degradation. The sequence is that of Tyrosine-protein phosphatase 2 (PTP2) from Saccharomyces cerevisiae (strain ATCC 204508 / S288c) (Baker's yeast).